Here is a 530-residue protein sequence, read N- to C-terminus: Na(+)/H(+) antiporter NhaB (530 aa).

13 helical membrane passes run 13-33 (FLGK…IINP), 34-54 (FVFF…EFIF), 64-84 (PLQP…TSPA), 90-110 (LVAN…IYFM), 113-133 (LLLY…LLSL), 136-156 (CLMA…AVVI), 205-225 (LLMH…VGEP), 234-254 (AGWL…PVFM), 306-326 (ALIA…VGLI), 351-371 (EEAL…AVII), 378-400 (PIIS…IANG), 450-470 (ATPN…APLI), and 481-501 (ALPY…FMLL).

Belongs to the NhaB Na(+)/H(+) (TC 2.A.34) antiporter family.

The protein resides in the cell inner membrane. It carries out the reaction 2 Na(+)(in) + 3 H(+)(out) = 2 Na(+)(out) + 3 H(+)(in). Na(+)/H(+) antiporter that extrudes sodium in exchange for external protons. This is Na(+)/H(+) antiporter NhaB from Photobacterium profundum (strain SS9).